We begin with the raw amino-acid sequence, 487 residues long: 1,4-beta-D-glucan cellobiohydrolase CEL6A (487 aa).

An N-terminal signal peptide occupies residues 1–17; that stretch reads MASKLFLAAALLQGALS. The CBM1 domain occupies 27 to 63; sequence ACAAQWGQCGGQDYTGPTCCQSGSTCVVSNQWYSQCL. 2 cysteine pairs are disulfide-bonded: C35-C52 and C46-C62. The span at 64–117 shows a compositional bias: low complexity; sequence PGSSNPTTTSRTSTSSSSSTSRTSSSTSRPPSSVPTTPTSVPPTITTTPTTTPT. Residues 64–127 form a disordered region; that stretch reads PGSSNPTTTS…GGSGPGTTAS (64 aa). Residues W175 and D177 each coordinate substrate. D216 is a catalytic residue. D262 serves as the catalytic Proton donor. Residues H307, W310, N346, W407, K435, and E439 each coordinate substrate. D441 (proton acceptor) is an active-site residue.

The protein belongs to the glycosyl hydrolase 6 (cellulase B) family.

The protein resides in the secreted. The enzyme catalyses Hydrolysis of (1-&gt;4)-beta-D-glucosidic linkages in cellulose and cellotetraose, releasing cellobiose from the non-reducing ends of the chains.. Its function is as follows. Exoglucanase that plays an important function in biomass degradation by catalyzing the hydrolysis of the non-reducing end beta-1,4-glucosidic linkages in cellulose and cellotetraose to release cellobiose. Shows higher hydrolytic activities on phosphoric acid-swollen cellulose (PSC), beta-glucan, and cellooligosaccharide derivatives than on cellulose, of which the best substrates were cellooligosaccharides. In Pyricularia oryzae (strain 70-15 / ATCC MYA-4617 / FGSC 8958) (Rice blast fungus), this protein is 1,4-beta-D-glucan cellobiohydrolase CEL6A.